A 146-amino-acid chain; its full sequence is Hemoglobin subunit beta-1 (146 aa).

Residues 2–146 (VWTNEERSII…VVSALGKQYH (145 aa)) enclose the Globin domain. Heme b contacts are provided by His-63 and His-92.

It belongs to the globin family. As to quaternary structure, hb1 is a heterotetramer of two alpha chains and two beta-1 chains. Red blood cells.

In terms of biological role, involved in oxygen transport from gills to the various peripheral tissues. In Pseudaphritis urvillii (Congolli), this protein is Hemoglobin subunit beta-1 (hbb1).